The sequence spans 191 residues: Ankyrin repeat domain-containing protein 22 (191 aa).

4 ANK repeats span residues 39 to 68 (NGDT…DVNL), 72 to 100 (KERT…MPVL), 101 to 130 (LIGY…EVNA), and 134 to 163 (DGYT…DPMI).

In Mus musculus (Mouse), this protein is Ankyrin repeat domain-containing protein 22 (Ankrd22).